We begin with the raw amino-acid sequence, 413 residues long: Protein MANNAN SYNTHESIS-RELATED (413 aa).

Residues 1-5 lie on the Cytoplasmic side of the membrane; that stretch reads MNSME. A helical; Signal-anchor for type II membrane protein transmembrane segment spans residues 6–26; the sequence is IRQAFAGLLTLSMFIMLGNMI. At 27 to 413 the chain is on the lumenal side; sequence KKDHFDYPAE…KNHLAYKCFC (387 aa). The N-linked (GlcNAc...) asparagine glycan is linked to N207. Residue 255-257 participates in substrate binding; the sequence is DLR.

The protein belongs to the glycosyltransferase GT106 family. In terms of tissue distribution, highly and specifically expressed in the endosperm.

The protein localises to the golgi apparatus membrane. The protein operates within glycan biosynthesis. Its function is as follows. Glycosyltransferase involved in mannan biosynthesis. The polypeptide is Protein MANNAN SYNTHESIS-RELATED (Trigonella foenum-graecum (Fenugreek)).